The chain runs to 156 residues: Ecotin (156 aa).

An N-terminal signal peptide occupies residues 1–19; it reads MKALLIAAGVAALSSTAMA. Cysteines 65 and 102 form a disulfide.

It belongs to the protease inhibitor I11 (ecotin) family. In terms of assembly, homodimer.

The protein resides in the periplasm. Its function is as follows. General inhibitor of family S1 serine proteases. The sequence is that of Ecotin from Pseudomonas aeruginosa (strain LESB58).